The chain runs to 84 residues: Serine protease inhibitor Kazal-type 2 (84 aa).

The N-terminal stretch at 1 to 23 is a signal peptide; it reads MALSVLRLALLLLAVTFAASLIP. A Pyrrolidone carboxylic acid modification is found at glutamine 24. The region spanning 30 to 84 is the Kazal-like domain; sequence KYRTPNCSQYRLPGCPRHFNPVCGSDMSTYANECTLCMKIREGGHNIKIIRNGPC. Intrachain disulfides connect cysteine 36–cysteine 66, cysteine 44–cysteine 63, and cysteine 52–cysteine 84.

Expressed in epididymis (at protein level).

The protein localises to the secreted. It localises to the cytoplasmic vesicle. Its subcellular location is the secretory vesicle. The protein resides in the acrosome. In terms of biological role, as a strong inhibitor of acrosin, it is required for normal spermiogenesis. It probably hinders premature activation of proacrosin and other proteases, thus preventing the cascade of events leading to spermiogenesis defects. May be involved in the regulation of serine protease-dependent germ cell apoptosis. It also inhibits trypsin. In Homo sapiens (Human), this protein is Serine protease inhibitor Kazal-type 2 (SPINK2).